The chain runs to 440 residues: Deoxyguanosinetriphosphate triphosphohydrolase-like protein (440 aa).

The region spanning 61–256 (RLIHSLEVSC…MEAADDLCYS (196 aa)) is the HD domain.

It belongs to the dGTPase family. Type 3 subfamily.

The protein is Deoxyguanosinetriphosphate triphosphohydrolase-like protein of Synechocystis sp. (strain ATCC 27184 / PCC 6803 / Kazusa).